The sequence spans 159 residues: Cyclic pyranopterin monophosphate synthase (159 aa).

Substrate-binding positions include 76–78 (LCH) and 114–115 (ME). The active site involves Asp-129.

Belongs to the MoaC family. As to quaternary structure, homohexamer; trimer of dimers.

It catalyses the reaction (8S)-3',8-cyclo-7,8-dihydroguanosine 5'-triphosphate = cyclic pyranopterin phosphate + diphosphate. The protein operates within cofactor biosynthesis; molybdopterin biosynthesis. Catalyzes the conversion of (8S)-3',8-cyclo-7,8-dihydroguanosine 5'-triphosphate to cyclic pyranopterin monophosphate (cPMP). The polypeptide is Cyclic pyranopterin monophosphate synthase (Psychromonas ingrahamii (strain DSM 17664 / CCUG 51855 / 37)).